A 1562-amino-acid polypeptide reads, in one-letter code: DNA-directed RNA polymerase subunit beta'' (1562 aa).

A disordered region spans residues 1 to 22; sequence MVKKKKFKTKNIQNPPFSSQNS. Polar residues predominate over residues 11–22; it reads NIQNPPFSSQNS. Zn(2+) is bound by residues Cys-275, Cys-338, Cys-345, and Cys-348.

Belongs to the RNA polymerase beta' chain family. RpoC2 subfamily. In terms of assembly, in plastids the minimal PEP RNA polymerase catalytic core is composed of four subunits: alpha, beta, beta', and beta''. When a (nuclear-encoded) sigma factor is associated with the core the holoenzyme is formed, which can initiate transcription. It depends on Zn(2+) as a cofactor.

It is found in the plastid. The protein localises to the chloroplast. It carries out the reaction RNA(n) + a ribonucleoside 5'-triphosphate = RNA(n+1) + diphosphate. DNA-dependent RNA polymerase catalyzes the transcription of DNA into RNA using the four ribonucleoside triphosphates as substrates. This is DNA-directed RNA polymerase subunit beta'' from Chlorella vulgaris (Green alga).